The following is a 1777-amino-acid chain: Fatty acid synthase subunit alpha (1777 aa).

Residues 101–124 (APVESADNEPAQPAASSTPAAPAP) are disordered. Over residues 110 to 120 (PAQPAASSTPA) the composition is skewed to low complexity. Positions 151 to 237 (LSAIDVVISI…KVMGGHIDRL (87 aa)) constitute a Carrier domain. Serine 186 bears the O-(pantetheine 4'-phosphoryl)serine mark. A ketoreductase (KR) domain region spans residues 563–803 (FTGRRVLVTG…ILSLLSGDIL (241 aa)). The 533-residue stretch at 1007 to 1539 (KEIMHEVVID…QKGGLVVGIA (533 aa)) folds into the Ketosynthase family 3 (KS3) domain. Catalysis depends on for beta-ketoacyl synthase activity residues cysteine 1193, histidine 1424, and histidine 1465. Aspartate 1661 serves as a coordination point for Mg(2+). Acetyl-CoA contacts are provided by residues 1661 to 1663 (DIE), 1706 to 1716 (EAIFKSLQIPS), 1730 to 1734 (SNGAQ), and 1760 to 1762 (ITH).

It belongs to the thiolase-like superfamily. Fungal fatty acid synthetase subunit alpha family. As to quaternary structure, fatty acid synthase is composed of alpha and beta subunits.

It carries out the reaction acetyl-CoA + n malonyl-CoA + 2n NADPH + 4n H(+) = a long-chain-acyl-CoA + n CoA + n CO2 + 2n NADP(+).. It catalyses the reaction a fatty acyl-[ACP] + malonyl-[ACP] + H(+) = a 3-oxoacyl-[ACP] + holo-[ACP] + CO2. The catalysed reaction is a (3R)-hydroxyacyl-[ACP] + NADP(+) = a 3-oxoacyl-[ACP] + NADPH + H(+). It participates in secondary metabolite biosynthesis. Its function is as follows. Fatty acid synthase alpha subunit; part of the gene cluster that mediates the biosynthesis of oryzines, natural products with an unusual maleidride backbone. The two subunits of the fungal fatty acid synthase oryfasA and oryfasB probably form octenoic acid. This fatty acid is most likely activated by the acyl-CoA ligase oryP to give octenyl-CoA before the citrate synthase-like protein oryE catalyzes condensation with oxaloacetate to form tricarboxylic acid. The next steps of the pathways are conjectural, but a favorite possible route has been proposed, beginning with decarboxylation and concomitant dehydration by the decarboxylase oryM, followed by tautomerization, which may lead to the production of a diene intermediate. Reduction of this diene intermediate could give the known metabolite piliformic acid. On the pathway to oryzine B and oryzine A, however, hydroxylation of the diene by the alpha-ketoglutarate-dependent dioxygenase oryG and lactonisation by the lactonohydrolases oryH or oryL could give oryzine B directly. Finally, enoyl reduction by the dehydrogenase oryD would then convert oryzine B into oryzine A. The chain is Fatty acid synthase subunit alpha from Aspergillus oryzae (strain ATCC 42149 / RIB 40) (Yellow koji mold).